A 380-amino-acid chain; its full sequence is Putative heat stress transcription factor B-4a (380 aa).

The segment at 216–245 (LLRGNAALVQELAHMRKLYSDIIYFVQNHV) is hydrophobic repeat HR-A/B. 2 disordered regions span residues 268–296 (PAGGKAPASEVRGASGRSATSSSSLTVAE) and 314–380 (INEV…VSPP). Positions 278-296 (VRGASGRSATSSSSLTVAE) are enriched in low complexity. The short motif at 346–348 (RKR) is the Nuclear localization signal element.

It belongs to the HSF family. Class B subfamily. In terms of assembly, homotrimer. In terms of processing, exhibits temperature-dependent phosphorylation.

The protein localises to the nucleus. Its function is as follows. Transcriptional regulator that specifically binds DNA of heat shock promoter elements (HSE). In Oryza sativa subsp. japonica (Rice), this protein is Putative heat stress transcription factor B-4a (HSFB4A).